A 309-amino-acid chain; its full sequence is Homoserine kinase (309 aa).

Residue 91–101 (PIGSGLGSSAC) coordinates ATP.

Belongs to the GHMP kinase family. Homoserine kinase subfamily.

It localises to the cytoplasm. It catalyses the reaction L-homoserine + ATP = O-phospho-L-homoserine + ADP + H(+). Its pathway is amino-acid biosynthesis; L-threonine biosynthesis; L-threonine from L-aspartate: step 4/5. In terms of biological role, catalyzes the ATP-dependent phosphorylation of L-homoserine to L-homoserine phosphate. This is Homoserine kinase from Pectobacterium carotovorum subsp. carotovorum (strain PC1).